A 367-amino-acid chain; its full sequence is Serine/threonine-protein kinase Sgk2 (367 aa).

Positions Met1–Pro28 are disordered. Position 10 is a phosphoserine (Ser10). Residues Arg15–Pro28 are compositionally biased toward polar residues. Positions Phe35–Phe292 constitute a Protein kinase domain. Residues Ile41–Val49 and Lys64 each bind ATP. The Nuclear localization signal motif lies at Lys68 to Gln77. Asp159 functions as the Proton acceptor in the catalytic mechanism. A Phosphothreonine; by PDPK1 modification is found at Thr193. In terms of domain architecture, AGC-kinase C-terminal spans Ser293 to Ser367. A phosphoserine mark is found at Ser334 and Ser356. At Tyr357 the chain carries Phosphotyrosine.

The protein belongs to the protein kinase superfamily. AGC Ser/Thr protein kinase family. Activated by phosphorylation on Ser-356 by an unknown kinase (may be mTORC2 but not confirmed), transforming it into a substrate for PDPK1 which then phosphorylates it on Thr-193. Expressed in the proximal tubule and thick ascending limb of the loop of Henle (TALH).

The protein localises to the cytoplasm. It localises to the nucleus. It carries out the reaction L-seryl-[protein] + ATP = O-phospho-L-seryl-[protein] + ADP + H(+). The catalysed reaction is L-threonyl-[protein] + ATP = O-phospho-L-threonyl-[protein] + ADP + H(+). Its activity is regulated as follows. Two specific sites, one in the kinase domain (Thr-193) and the other in the C-terminal regulatory region (Ser-356), need to be phosphorylated for its full activation. Functionally, serine/threonine-protein kinase which is involved in the regulation of a wide variety of ion channels, membrane transporters, cell growth, survival and proliferation. Up-regulates Na(+) channels: SCNN1A/ENAC, K(+) channels: KCNA3/Kv1.3, KCNE1 and KCNQ1, amino acid transporter: SLC6A19, glutamate transporter: SLC1A6/EAAT4, glutamate receptors: GRIA1/GLUR1 and GRIK2/GLUR6, Na(+)/H(+) exchanger: SLC9A3/NHE3, and the Na(+)/K(+) ATPase. This is Serine/threonine-protein kinase Sgk2 (Sgk2) from Rattus norvegicus (Rat).